Here is a 510-residue protein sequence, read N- to C-terminus: Cytochrome c-552 (510 aa).

Positions 1–50 (MVVFLFILYRQSDLKFKSMNGVIIVNTLKKRLFVATTMIWGLSVTLPVLA) are cleaved as a signal peptide. H124 serves as a coordination point for heme c. C152, C155, and K156 together coordinate heme. C190, C193, H194, C239, C242, and H243 together coordinate heme c. Residues E245, Y246, K291, and Q293 each contribute to the Ca(2+) site. Residue Y246 coordinates substrate. Residue H294 coordinates substrate. Positions 305, 312, 315, 316, 331, 344, 347, 348, and 423 each coordinate heme c.

Belongs to the cytochrome c-552 family. The cofactor is Ca(2+). It depends on heme c as a cofactor.

The protein localises to the periplasm. It carries out the reaction 6 Fe(III)-[cytochrome c] + NH4(+) + 2 H2O = 6 Fe(II)-[cytochrome c] + nitrite + 8 H(+). Its pathway is nitrogen metabolism; nitrate reduction (assimilation). Its function is as follows. Catalyzes the reduction of nitrite to ammonia, consuming six electrons in the process. The protein is Cytochrome c-552 of Pasteurella multocida (strain Pm70).